A 159-amino-acid chain; its full sequence is Putative UPF0479 protein YDR545C-A (159 aa).

2 helical membrane-spanning segments follow: residues 38 to 58 and 135 to 155; these read IVFCLPFFPALFLVPVQKVLQ and VPMIWLDVFQVFFVFLVISQH.

This sequence belongs to the UPF0479 family.

The protein resides in the membrane. In Saccharomyces cerevisiae (strain ATCC 204508 / S288c) (Baker's yeast), this protein is Putative UPF0479 protein YDR545C-A.